We begin with the raw amino-acid sequence, 487 residues long: L-tartrate/succinate antiporter (487 aa).

14 helical membrane-spanning segments follow: residues 10–30 (YLAP…AGLE), 33–53 (TWLY…EPVP), 54–74 (GAVV…WLLF), 93–113 (WAVS…FMFG), 137–157 (TLFL…VTPS), 189–209 (IGSY…AIFL), 230–250 (LSWG…VLLV), 292–312 (LMVG…AAMV), 313–333 (GYSV…DIVS), 340–360 (VFFW…TGFI), 370–390 (SLSG…FYLL), 393–413 (FFAS…AAAL), 418–438 (IPLP…SILT), and 465–485 (IFGL…MPVV).

Belongs to the SLC13A/DASS transporter (TC 2.A.47) family. DIT1 subfamily.

The protein resides in the cell inner membrane. The catalysed reaction is (2R,3R)-tartrate(out) + succinate(in) = (2R,3R)-tartrate(in) + succinate(out). In terms of biological role, catalyzes the uptake of tartrate in exchange for intracellular succinate. Essential for anaerobic L-tartrate fermentation. The sequence is that of L-tartrate/succinate antiporter (ttdT) from Shigella dysenteriae serotype 1 (strain Sd197).